Consider the following 178-residue polypeptide: CDP-archaeol synthase (178 aa).

Transmembrane regions (helical) follow at residues 3–23 (IIYL…ANAT), 55–75 (TFFG…IFNL), 91–111 (GIVG…GSFI), 125–145 (ILDQ…FAPV), and 149–169 (MGIF…IIAY).

This sequence belongs to the CDP-archaeol synthase family. Mg(2+) is required as a cofactor.

It is found in the cell membrane. It catalyses the reaction 2,3-bis-O-(geranylgeranyl)-sn-glycerol 1-phosphate + CTP + H(+) = CDP-2,3-bis-O-(geranylgeranyl)-sn-glycerol + diphosphate. The protein operates within membrane lipid metabolism; glycerophospholipid metabolism. In terms of biological role, catalyzes the formation of CDP-2,3-bis-(O-geranylgeranyl)-sn-glycerol (CDP-archaeol) from 2,3-bis-(O-geranylgeranyl)-sn-glycerol 1-phosphate (DGGGP) and CTP. This reaction is the third ether-bond-formation step in the biosynthesis of archaeal membrane lipids. The sequence is that of CDP-archaeol synthase from Methanococcus aeolicus (strain ATCC BAA-1280 / DSM 17508 / OCM 812 / Nankai-3).